Here is a 369-residue protein sequence, read N- to C-terminus: Zeaxanthin 7,8(7',8')-cleavage dioxygenase, chromoplastic (369 aa).

Histidine 62, histidine 112, histidine 177, and histidine 356 together coordinate Fe cation.

It belongs to the carotenoid oxygenase family. Fe(2+) is required as a cofactor. In the style branches.

Its subcellular location is the plastid. The protein resides in the chromoplast. It catalyses the reaction all-trans-zeaxanthin + 2 O2 = crocetin dialdehyde + 2 3beta-hydroxy-beta-cyclocitral. Its function is as follows. Cleaves zeaxanthin symmetrically at the 7-8 and 7'-8' double bonds to produce crocetin dialdehyde and hydroxy-beta-cyclocitral, two water-soluble precursors sequestred in vacuoles and involved in the synthesis of saffron pigment and aroma. The polypeptide is Zeaxanthin 7,8(7',8')-cleavage dioxygenase, chromoplastic (ZCD) (Crocus sativus (Saffron)).